The primary structure comprises 288 residues: Elongation factor Ts (288 aa).

The interval 82–85 is involved in Mg(2+) ion dislocation from EF-Tu; sequence TDFV.

This sequence belongs to the EF-Ts family.

The protein resides in the cytoplasm. In terms of biological role, associates with the EF-Tu.GDP complex and induces the exchange of GDP to GTP. It remains bound to the aminoacyl-tRNA.EF-Tu.GTP complex up to the GTP hydrolysis stage on the ribosome. This Chlorobium phaeobacteroides (strain BS1) protein is Elongation factor Ts.